Reading from the N-terminus, the 513-residue chain is ATP synthase subunit alpha (513 aa).

169 to 176 provides a ligand contact to ATP; sequence GDRKTGKS.

The protein belongs to the ATPase alpha/beta chains family. F-type ATPases have 2 components, CF(1) - the catalytic core - and CF(0) - the membrane proton channel. CF(1) has five subunits: alpha(3), beta(3), gamma(1), delta(1), epsilon(1). CF(0) has three main subunits: a(1), b(2) and c(9-12). The alpha and beta chains form an alternating ring which encloses part of the gamma chain. CF(1) is attached to CF(0) by a central stalk formed by the gamma and epsilon chains, while a peripheral stalk is formed by the delta and b chains.

It is found in the cell membrane. The enzyme catalyses ATP + H2O + 4 H(+)(in) = ADP + phosphate + 5 H(+)(out). Its function is as follows. Produces ATP from ADP in the presence of a proton gradient across the membrane. The alpha chain is a regulatory subunit. The protein is ATP synthase subunit alpha of Levilactobacillus brevis (strain ATCC 367 / BCRC 12310 / CIP 105137 / JCM 1170 / LMG 11437 / NCIMB 947 / NCTC 947) (Lactobacillus brevis).